A 210-amino-acid chain; its full sequence is Large ribosomal subunit protein uL3 (210 aa).

The disordered stretch occupies residues 121–150 (GGIKRHGFHRGPMAHGSKYHRRPGSLGAKG).

Belongs to the universal ribosomal protein uL3 family. Part of the 50S ribosomal subunit. Forms a cluster with proteins L14 and L19.

One of the primary rRNA binding proteins, it binds directly near the 3'-end of the 23S rRNA, where it nucleates assembly of the 50S subunit. The chain is Large ribosomal subunit protein uL3 from Pelotomaculum thermopropionicum (strain DSM 13744 / JCM 10971 / SI).